We begin with the raw amino-acid sequence, 325 residues long: Tetraacyldisaccharide 4'-kinase (325 aa).

55-62 (TAGGNGKT) is an ATP binding site.

The protein belongs to the LpxK family.

The enzyme catalyses a lipid A disaccharide + ATP = a lipid IVA + ADP + H(+). The protein operates within glycolipid biosynthesis; lipid IV(A) biosynthesis; lipid IV(A) from (3R)-3-hydroxytetradecanoyl-[acyl-carrier-protein] and UDP-N-acetyl-alpha-D-glucosamine: step 6/6. Functionally, transfers the gamma-phosphate of ATP to the 4'-position of a tetraacyldisaccharide 1-phosphate intermediate (termed DS-1-P) to form tetraacyldisaccharide 1,4'-bis-phosphate (lipid IVA). The polypeptide is Tetraacyldisaccharide 4'-kinase (Salmonella arizonae (strain ATCC BAA-731 / CDC346-86 / RSK2980)).